The sequence spans 56 residues: Hydrophobic protein LTI6A (56 aa).

2 helical membrane passes run 11–31 (IILAIILPPLGVFFKFGCGIE) and 34–54 (ICLLLTFFGYLPGIIYAVWVI).

The protein belongs to the UPF0057 (PMP3) family. Expressed in shoot of cold stressed seedlings.

It localises to the membrane. Functionally, plays a role in the regulation of membrane potential. Could mediate a proton leak. The chain is Hydrophobic protein LTI6A (LTI6A) from Oryza sativa subsp. japonica (Rice).